The chain runs to 618 residues: Sodium-coupled monocarboxylate transporter 2 (618 aa).

Over 1-9 the chain is Extracellular; it reads MEVKNFAVW. A helical transmembrane segment spans residues 10-30; the sequence is DYVVFAALFFISSGIGVFFAI. The Cytoplasmic portion of the chain corresponds to 31-47; it reads KERKKATSREFLVGGRQ. The chain crosses the membrane as a helical span at residues 48–68; it reads MSFGPVGLSLTASFMSAVTVL. Residues 69-82 lie on the Extracellular side of the membrane; that stretch reads GTPSEVYRFGASFL. Residues 83-103 form a helical membrane-spanning segment; sequence VFFIAYLFVILLTSELFLPVF. Residues 104–128 are Cytoplasmic-facing; it reads YRSGITSTYEYLQLRFNKPVRYAAT. Residues 129–149 form a helical membrane-spanning segment; the sequence is VIYIVQTILYTGVVVYAPALA. The Extracellular portion of the chain corresponds to 150–157; that stretch reads LNQVTGFD. The chain crosses the membrane as a helical span at residues 158-178; sequence LWGSVFATGIVCTFYCTLGGL. Topologically, residues 179–180 are cytoplasmic; the sequence is KA. A helical membrane pass occupies residues 181-201; that stretch reads VVWTDAFQMVVMIVGFLTVLI. Topologically, residues 202–235 are extracellular; that stretch reads QGSTHAGGFHNVLEQSTNGSRLHIFDFDVDPLRR. The chain crosses the membrane as a helical span at residues 236–256; it reads HTFWTITVGGTFTWLGIYGVN. The Cytoplasmic portion of the chain corresponds to 257 to 275; the sequence is QSTIQRCISCKTEKHAKLA. A helical membrane pass occupies residues 276–296; sequence LYFNLLGLWIILVCAVFSGLI. The Extracellular portion of the chain corresponds to 297 to 321; that stretch reads MYSHFKDCDPWTSGIISAPDQLMPY. Residues 322–342 form a helical membrane-spanning segment; sequence FVMEIFATMPGLPGLFVACAF. Topologically, residues 343–385 are cytoplasmic; that stretch reads SGTLSTVASSINALATVTFEDFVKSCFPHLSDKLSTWISKGLC. The helical transmembrane segment at 386–406 threads the bilayer; that stretch reads LLFGVMCTSMAVAASVMGGVV. At 407-411 the chain is on the extracellular side; that stretch reads QASLS. A helical membrane pass occupies residues 412–432; the sequence is IHGMCGGPMLGLFSLGIVFPF. Over 433–437 the chain is Cytoplasmic; that stretch reads VNWKG. A helical membrane pass occupies residues 438–458; sequence ALGGLLTGITLSFWVAIGAFI. Topologically, residues 459 to 504 are extracellular; that stretch reads YPAPASKTWPLPLSTDQCIKSNVTATGPPVLSSRPGIADTWYSISY. A glycan (N-linked (GlcNAc...) asparagine) is linked at Asn480. The chain crosses the membrane as a helical span at residues 505–525; the sequence is LYYSAVGCLGCIVAGVIISLI. Residues 526–618 are Cytoplasmic-facing; that stretch reads TGRQRGEDIQ…NNMAFETTHF (93 aa).

It belongs to the sodium:solute symporter (SSF) (TC 2.A.21) family.

Its subcellular location is the apical cell membrane. It catalyses the reaction (S)-lactate(out) + Na(+)(out) = (S)-lactate(in) + Na(+)(in). The enzyme catalyses nicotinate(out) + Na(+)(out) = nicotinate(in) + Na(+)(in). The catalysed reaction is pyruvate(out) + Na(+)(out) = pyruvate(in) + Na(+)(in). It carries out the reaction propanoate(out) + Na(+)(out) = propanoate(in) + Na(+)(in). It catalyses the reaction butanoate(out) + Na(+)(out) = butanoate(in) + Na(+)(in). The enzyme catalyses acetoacetate(out) + Na(+)(out) = acetoacetate(in) + Na(+)(in). With respect to regulation, cotransport of monocarboxylates and nicotinate strongly inhibited by ibuprofen, fenoprofen and ketoprofen. Acts as an electroneutral and low-affinity sodium (Na(+))-dependent sodium-coupled solute transporter. Catalyzes the transport across the plasma membrane of many monocarboxylates such as lactate, pyruvate, nicotinate, propionate, butyrate and beta-D-hydroxybutyrate. May be responsible for the first step of reabsorption of monocarboxylates from the lumen of the proximal tubule of the kidney and the small intestine. May play also a role in monocarboxylates transport in the retina. This Homo sapiens (Human) protein is Sodium-coupled monocarboxylate transporter 2.